The chain runs to 344 residues: Heat-inducible transcription repressor HrcA (344 aa).

Belongs to the HrcA family.

In terms of biological role, negative regulator of class I heat shock genes (grpE-dnaK-dnaJ and groELS operons). Prevents heat-shock induction of these operons. The sequence is that of Heat-inducible transcription repressor HrcA from Streptococcus pyogenes serotype M6 (strain ATCC BAA-946 / MGAS10394).